Reading from the N-terminus, the 270-residue chain is MIMTRKNILSVKRIVVKIGTSSLILPNGKINLSNIDELAFVLSDLNNKGYEVILVTSGAIGVGLNVLGIDKRPKGIADQQALASIGQVELMSLYTQMFRRYSQKVSQLLLTRDVTDFPTSRENAENALNALLGLGIIPIINENDAIAVDEMDHQTKFGDNDKLGAIVSKLVNADLLIMLSDIDGLFDKNPSIYDDAKIFNEIHEITDELRQMAGGAGSRFGTGGMTSKLAAAQILFENGQEMVLTNGERIREIKEIIEGREIGTYFHQKS.

Lys-17 contributes to the ATP binding site. Residues Ser-57, Asp-144, and Asn-160 each contribute to the substrate site. Residues 180 to 181 (SD) and 222 to 228 (TGGMTSK) each bind ATP.

Belongs to the glutamate 5-kinase family.

Its subcellular location is the cytoplasm. The enzyme catalyses L-glutamate + ATP = L-glutamyl 5-phosphate + ADP. The protein operates within amino-acid biosynthesis; L-proline biosynthesis; L-glutamate 5-semialdehyde from L-glutamate: step 1/2. Functionally, catalyzes the transfer of a phosphate group to glutamate to form L-glutamate 5-phosphate. The chain is Glutamate 5-kinase from Lactococcus lactis subsp. lactis (strain IL1403) (Streptococcus lactis).